We begin with the raw amino-acid sequence, 1131 residues long: Phytochrome B1 (1131 aa).

Basic residues predominate over residues M1–Y11. The tract at residues M1–N26 is disordered. The segment covering S14–S25 has biased composition (low complexity). The GAF domain occupies D229–L408. C334 provides a ligand contact to phytochromobilin. 2 consecutive PAS domains span residues V622 to V693 and D756 to F808. Residues Y904–R1124 enclose the Histidine kinase domain.

This sequence belongs to the phytochrome family. Homodimer. In terms of processing, contains one covalently linked phytochromobilin chromophore.

Its function is as follows. Regulatory photoreceptor which exists in two forms that are reversibly interconvertible by light: the Pr form that absorbs maximally in the red region of the spectrum and the Pfr form that absorbs maximally in the far-red region. Photoconversion of Pr to Pfr induces an array of morphogenic responses, whereas reconversion of Pfr to Pr cancels the induction of those responses. Pfr controls the expression of a number of nuclear genes including those encoding the small subunit of ribulose-bisphosphate carboxylase, chlorophyll A/B binding protein, protochlorophyllide reductase, rRNA, etc. It also controls the expression of its own gene(s) in a negative feedback fashion. In Solanum lycopersicum (Tomato), this protein is Phytochrome B1.